The sequence spans 118 residues: MARIKRGVVAHARHKKILKQAKGYYGARSRIYRVAHQAVIKAGQYAYRDRRQRKRQFRQLWISRINAAVRQSKMSYSNFIFGLKKASINIDRKILSDIAIFDLLSFNALVKKAKEALL.

The protein belongs to the bacterial ribosomal protein bL20 family.

Its function is as follows. Binds directly to 23S ribosomal RNA and is necessary for the in vitro assembly process of the 50S ribosomal subunit. It is not involved in the protein synthesizing functions of that subunit. The sequence is that of Large ribosomal subunit protein bL20 from Buchnera aphidicola subsp. Acyrthosiphon pisum (strain 5A).